Consider the following 506-residue polypeptide: MPDTAPQLRLYNMLTRTKEAFAPIDAKNVRMYVCGPTVYDFAHIGNARPVIVFDVLFRLLRHVYGAQHVTYARNITDVDDKINARAARDYPDLPFNEAIRKVTESTNAQFQADVTALGNLQPTVQPRATEHMDEMRAMIDRLVQRGVAYVAQDHVLFSPSAMNARKGPRYGALARRSLDEMLAGARVDVASYKRDEMDFVLWKPSKKGEPGWPSPAGIETLGRPGWHIECSAMSMAKLLEPFGGGLKCDDPERNQFDIHGGGIDLVFPHHENEIAQSCCALGTERMANIWMHNGFLQVEGQKMSKSLGNFITIRDVLNDGLPQLGEWGDNTVRDRWAGLAARLSMLQTHYREPINWTAQRLAESADELHRWYGLLRDEGFGAPEKLSHASAVAAALCDDLNSWAAITALRQAFKVRDVAALGEGMALMGLLDPYFVTASDVPIFARADVDASAIAARIAERLNFINAKNWAEADRIRDELLQEGVQLKDSKDPATGERITTWDVVG.

Zn(2+) is bound at residue cysteine 34. The 'HIGH' region motif lies at 36–46 (PTVYDFAHIGN). Positions 230, 269, and 273 each coordinate Zn(2+). The 'KMSKS' region signature appears at 302–306 (KMSKS). Lysine 305 serves as a coordination point for ATP.

It belongs to the class-I aminoacyl-tRNA synthetase family. In terms of assembly, monomer. Zn(2+) is required as a cofactor.

It localises to the cytoplasm. The enzyme catalyses tRNA(Cys) + L-cysteine + ATP = L-cysteinyl-tRNA(Cys) + AMP + diphosphate. This is Cysteine--tRNA ligase from Brucella suis (strain ATCC 23445 / NCTC 10510).